The chain runs to 456 residues: Bifunctional protein GlmU (456 aa).

The segment at 1 to 230 is pyrophosphorylase; the sequence is MDKRFAVILA…FQETLGVNDR (230 aa). UDP-N-acetyl-alpha-D-glucosamine is bound by residues 9-12, Lys-23, Gln-73, and 78-79; these read LAAG and GT. A Mg(2+)-binding site is contributed by Asp-103. The UDP-N-acetyl-alpha-D-glucosamine site is built by Gly-140, Glu-155, Asn-170, and Asn-228. Residue Asn-228 coordinates Mg(2+). The segment at 231–251 is linker; it reads VALSQAEMYMKERINKRHMQN. Residues 252 to 456 are N-acetyltransferase; that stretch reads GVTLIDPMNT…EDYVKNIHKK (205 aa). Arg-333 and Lys-351 together coordinate UDP-N-acetyl-alpha-D-glucosamine. His-363 (proton acceptor) is an active-site residue. The UDP-N-acetyl-alpha-D-glucosamine site is built by Tyr-366 and Asn-377. Residues 386–387, Ala-423, and Arg-440 contribute to the acetyl-CoA site; that span reads NY.

It in the N-terminal section; belongs to the N-acetylglucosamine-1-phosphate uridyltransferase family. This sequence in the C-terminal section; belongs to the transferase hexapeptide repeat family. Homotrimer. Requires Mg(2+) as cofactor.

The protein localises to the cytoplasm. The catalysed reaction is alpha-D-glucosamine 1-phosphate + acetyl-CoA = N-acetyl-alpha-D-glucosamine 1-phosphate + CoA + H(+). It catalyses the reaction N-acetyl-alpha-D-glucosamine 1-phosphate + UTP + H(+) = UDP-N-acetyl-alpha-D-glucosamine + diphosphate. Its pathway is nucleotide-sugar biosynthesis; UDP-N-acetyl-alpha-D-glucosamine biosynthesis; N-acetyl-alpha-D-glucosamine 1-phosphate from alpha-D-glucosamine 6-phosphate (route II): step 2/2. It functions in the pathway nucleotide-sugar biosynthesis; UDP-N-acetyl-alpha-D-glucosamine biosynthesis; UDP-N-acetyl-alpha-D-glucosamine from N-acetyl-alpha-D-glucosamine 1-phosphate: step 1/1. It participates in bacterial outer membrane biogenesis; LPS lipid A biosynthesis. Catalyzes the last two sequential reactions in the de novo biosynthetic pathway for UDP-N-acetylglucosamine (UDP-GlcNAc). The C-terminal domain catalyzes the transfer of acetyl group from acetyl coenzyme A to glucosamine-1-phosphate (GlcN-1-P) to produce N-acetylglucosamine-1-phosphate (GlcNAc-1-P), which is converted into UDP-GlcNAc by the transfer of uridine 5-monophosphate (from uridine 5-triphosphate), a reaction catalyzed by the N-terminal domain. This Bacillus velezensis (strain DSM 23117 / BGSC 10A6 / LMG 26770 / FZB42) (Bacillus amyloliquefaciens subsp. plantarum) protein is Bifunctional protein GlmU.